The sequence spans 689 residues: Glycine--tRNA ligase beta subunit (689 aa).

It belongs to the class-II aminoacyl-tRNA synthetase family. As to quaternary structure, tetramer of two alpha and two beta subunits.

It is found in the cytoplasm. It catalyses the reaction tRNA(Gly) + glycine + ATP = glycyl-tRNA(Gly) + AMP + diphosphate. The polypeptide is Glycine--tRNA ligase beta subunit (Aeromonas salmonicida (strain A449)).